A 687-amino-acid chain; its full sequence is Ribonuclease E (687 aa).

The S1 motif domain maps to 35-117 (GDIYLGVVEN…LTGNITLPGR (83 aa)). Mg(2+) contacts are provided by D296 and D339. Zn(2+)-binding residues include C397 and C400. Residues 650–687 (PIKLTETMEESEVNAASTANRRRRRRSSASDSDTGEDS) form a disordered region. The C4 Arg-rich motif, necessary and sufficient to confer PNPase binding on another protein signature appears at 670-678 (RRRRRRSSA).

The protein belongs to the RNase E/G family. In terms of assembly, may form homodimers or higher order multimers. Interacts with polynucleotide phosphorylase (PNPase, pnp) via the C4 Arg-rich motif (residues 670-678). A homotetramer formed by a dimer of dimers. The cofactor is Mg(2+). Zn(2+) is required as a cofactor.

It is found in the cytoplasm. The catalysed reaction is Endonucleolytic cleavage of single-stranded RNA in A- and U-rich regions.. In terms of biological role, endoribonuclease that plays a central role in rRNA and tRNA processing and mRNA decay. Has been shown to act on 9S rRNA (the precursor of 5S rRNA). The protein is Ribonuclease E of Nostoc sp. (strain PCC 7120 / SAG 25.82 / UTEX 2576).